Here is a 209-residue protein sequence, read N- to C-terminus: Mitochondrial import inner membrane translocase subunit Tim23 (209 aa).

Transmembrane regions (helical) follow at residues 73–93 (FELA…FGAM), 125–145 (ALWA…GVII), and 172–194 (GGLR…YALY).

This sequence belongs to the Tim17/Tim22/Tim23 family. In terms of assembly, component of the TIM23 complex at least composed of TIMM23, TIMM17 (TIMM17A or TIMM17B) and TIMM50; within this complex, directly interacts with TIMM50. The complex interacts with the TIMM44 component of the PAM complex and with DNAJC15. Upon mitochondrial depolarization, interacts with PINK1; the interaction is required for PINK1 accumulation at the outer mitochondrial membrane, kinase activation by autophosphorylation and PRKN recruitement to mitochondria.

Its subcellular location is the mitochondrion inner membrane. In terms of biological role, essential component of the TIM23 complex, a complex that mediates the translocation of transit peptide-containing proteins across the mitochondrial inner membrane. Has a role in the activation of stress-induced mitophagy by protecting PINK1 from OMA1-mediated degradation and facilitating its accumulation at the outer mitochondrial membrane in response to depolarization. This is Mitochondrial import inner membrane translocase subunit Tim23 (TIMM23) from Pongo abelii (Sumatran orangutan).